The primary structure comprises 264 residues: Teichoic acids export ATP-binding protein TagH (264 aa).

Residues 5–243 (VNIKNVTKEY…YEAFLNDFKK (239 aa)) enclose the ABC transporter domain. 57–64 (GINGSGKS) provides a ligand contact to ATP.

Belongs to the ABC transporter superfamily. Teichoic acids exporter (TC 3.A.1.104.1) family. The complex is composed of two ATP-binding proteins (TagH) and two transmembrane proteins (TagG).

It localises to the cell membrane. It carries out the reaction ATP + H2O + teichoic acidSide 1 = ADP + phosphate + teichoic acidSide 2.. In terms of biological role, part of the ABC transporter complex TagGH involved in teichoic acids export. Responsible for energy coupling to the transport system. This is Teichoic acids export ATP-binding protein TagH from Staphylococcus aureus (strain Mu50 / ATCC 700699).